Here is a 266-residue protein sequence, read N- to C-terminus: Small ribosomal subunit protein eS1 (266 aa).

The disordered stretch occupies residues 237 to 266; sequence DGGSKTGEVGETGSKVDRPEGYEPPVQETV.

The protein belongs to the eukaryotic ribosomal protein eS1 family. Component of the small ribosomal subunit. Mature ribosomes consist of a small (40S) and a large (60S) subunit. The 40S subunit contains about 33 different proteins and 1 molecule of RNA (18S). The 60S subunit contains about 49 different proteins and 3 molecules of RNA (28S, 5.8S and 5S).

It localises to the cytoplasm. The chain is Small ribosomal subunit protein eS1 from Lysiphlebus testaceipes (Greenbugs aphid parastoid).